Reading from the N-terminus, the 634-residue chain is Putative ABC transporter ATP-binding protein MG015 homolog (634 aa).

Transmembrane regions (helical) follow at residues 54–74, 111–131, 189–209, 213–233, 296–316, and 325–345; these read VLYV…NSIL, LTIV…FNVA, VGGQ…ILFV, VIAL…FLFL, VFIY…SISI, and IPSF…IAAL. An ABC transmembrane type-1 domain is found at 54–364; it reads VLYVMVCAIF…IFSLWNLIQL (311 aa). The ABC transporter domain occupies 397-631; sequence IRFEKVVFGY…NGFYARLKRS (235 aa). 430-437 serves as a coordination point for ATP; the sequence is GPTGAGKS.

It belongs to the ABC transporter superfamily.

Its subcellular location is the cell membrane. This chain is Putative ABC transporter ATP-binding protein MG015 homolog, found in Mycoplasma pneumoniae (strain ATCC 29342 / M129 / Subtype 1) (Mycoplasmoides pneumoniae).